The sequence spans 876 residues: Leucine--tRNA ligase (876 aa).

Residues 42–52 carry the 'HIGH' region motif; that stretch reads PYPSGKLHMGH. The 'KMSKS' region signature appears at 634-638; sequence KMSKS. K637 is an ATP binding site.

The protein belongs to the class-I aminoacyl-tRNA synthetase family.

Its subcellular location is the cytoplasm. The catalysed reaction is tRNA(Leu) + L-leucine + ATP = L-leucyl-tRNA(Leu) + AMP + diphosphate. The protein is Leucine--tRNA ligase of Neisseria gonorrhoeae (strain ATCC 700825 / FA 1090).